The primary structure comprises 317 residues: Ribosomal protein L11 methyltransferase (317 aa).

The S-adenosyl-L-methionine site is built by threonine 158, glycine 179, aspartate 201, and asparagine 244.

It belongs to the methyltransferase superfamily. PrmA family.

The protein resides in the cytoplasm. It carries out the reaction L-lysyl-[protein] + 3 S-adenosyl-L-methionine = N(6),N(6),N(6)-trimethyl-L-lysyl-[protein] + 3 S-adenosyl-L-homocysteine + 3 H(+). In terms of biological role, methylates ribosomal protein L11. The polypeptide is Ribosomal protein L11 methyltransferase (Lactococcus lactis subsp. cremoris (strain SK11)).